The primary structure comprises 422 residues: 5'-deoxyadenosine deaminase (422 aa).

Zn(2+)-binding residues include His57 and His59. 2 residues coordinate substrate: Glu86 and His178. His205 serves as a coordination point for Zn(2+). Residues Glu208 and Asp294 each coordinate substrate. Zn(2+) is bound at residue Asp294.

It belongs to the metallo-dependent hydrolases superfamily. MTA/SAH deaminase family. In terms of assembly, homotetramer. Zn(2+) serves as cofactor.

It catalyses the reaction 5'-deoxyadenosine + H2O + H(+) = 5'-deoxyinosine + NH4(+). The enzyme catalyses S-adenosyl-L-homocysteine + H2O + H(+) = S-inosyl-L-homocysteine + NH4(+). The catalysed reaction is S-methyl-5'-thioadenosine + H2O + H(+) = S-methyl-5'-thioinosine + NH4(+). It carries out the reaction adenosine + H2O + H(+) = inosine + NH4(+). The protein operates within amino-acid biosynthesis; S-adenosyl-L-methionine biosynthesis. Its function is as follows. Catalyzes the deamination of three SAM-derived enzymatic products, namely 5'-deoxyadenosine, S-adenosyl-L-homocysteine, and 5'-methylthioadenosine, to produce the inosine analogs. Can also deaminate adenosine. The preferred substrate for this enzyme is 5'-deoxyadenosine, but all these substrates are efficiently deaminated. Likely functions in a S-adenosyl-L-methionine (SAM) recycling pathway from S-adenosyl-L-homocysteine (SAH) produced from SAM-dependent methylation reactions. May also be involved in the recycling of 5'-deoxyadenosine, whereupon the 5'-deoxyribose moiety of 5'-deoxyinosine is further metabolized to deoxyhexoses used for the biosynthesis of aromatic amino acids in methanogens. The sequence is that of 5'-deoxyadenosine deaminase from Methanococcus maripaludis (strain DSM 14266 / JCM 13030 / NBRC 101832 / S2 / LL).